A 101-amino-acid polypeptide reads, in one-letter code: Small ribosomal subunit protein uS14 (101 aa).

The protein belongs to the universal ribosomal protein uS14 family. As to quaternary structure, part of the 30S ribosomal subunit. Contacts proteins S3 and S10.

Functionally, binds 16S rRNA, required for the assembly of 30S particles and may also be responsible for determining the conformation of the 16S rRNA at the A site. The protein is Small ribosomal subunit protein uS14 of Pseudomonas syringae pv. syringae (strain B728a).